The sequence spans 259 residues: UPF0246 protein PBPRA0561 (259 aa).

This sequence belongs to the UPF0246 family.

This Photobacterium profundum (strain SS9) protein is UPF0246 protein PBPRA0561.